The primary structure comprises 253 residues: uncharacterized protein (253 aa).

The segment covering 175-184 (NPTQTSPGKP) has biased composition (polar residues). The disordered stretch occupies residues 175–253 (NPTQTSPGKP…ATENEDRLPS (79 aa)). Phosphoserine is present on S180. Composition is skewed to low complexity over residues 185 to 196 (STSESSQTDTST) and 203 to 214 (TPTTTRASSYTT). Over residues 215–242 (LVSTSNQVSNEAEASAVETSANQAQNTE) the composition is skewed to polar residues.

It belongs to the TRAPP small subunits family. BET3 subfamily.

This is an uncharacterized protein from Schizosaccharomyces pombe (strain 972 / ATCC 24843) (Fission yeast).